The following is a 155-amino-acid chain: Ribosome maturation factor RimP (155 aa).

The protein belongs to the RimP family.

The protein resides in the cytoplasm. In terms of biological role, required for maturation of 30S ribosomal subunits. The polypeptide is Ribosome maturation factor RimP (Dichelobacter nodosus (strain VCS1703A)).